The following is a 418-amino-acid chain: ATP phosphoribosyltransferase regulatory subunit (418 aa).

The protein belongs to the class-II aminoacyl-tRNA synthetase family. HisZ subfamily. Heteromultimer composed of HisG and HisZ subunits.

It localises to the cytoplasm. Its pathway is amino-acid biosynthesis; L-histidine biosynthesis; L-histidine from 5-phospho-alpha-D-ribose 1-diphosphate: step 1/9. Required for the first step of histidine biosynthesis. May allow the feedback regulation of ATP phosphoribosyltransferase activity by histidine. The protein is ATP phosphoribosyltransferase regulatory subunit of Halothermothrix orenii (strain H 168 / OCM 544 / DSM 9562).